We begin with the raw amino-acid sequence, 108 residues long: uncharacterized protein (108 aa).

A compositionally biased stretch (basic and acidic residues) spans 1–10 (MDMLHNKCSD). Residues 1–27 (MDMLHNKCSDAIKSTSNSNLSNEVDKQ) are disordered. A compositionally biased stretch (polar residues) spans 12–22 (IKSTSNSNLSN).

This is an uncharacterized protein from Saccharomyces cerevisiae (strain ATCC 204508 / S288c) (Baker's yeast).